We begin with the raw amino-acid sequence, 212 residues long: Peptide methionine sulfoxide reductase MsrA (212 aa).

C52 is an active-site residue.

The protein belongs to the MsrA Met sulfoxide reductase family.

It catalyses the reaction L-methionyl-[protein] + [thioredoxin]-disulfide + H2O = L-methionyl-(S)-S-oxide-[protein] + [thioredoxin]-dithiol. The enzyme catalyses [thioredoxin]-disulfide + L-methionine + H2O = L-methionine (S)-S-oxide + [thioredoxin]-dithiol. Has an important function as a repair enzyme for proteins that have been inactivated by oxidation. Catalyzes the reversible oxidation-reduction of methionine sulfoxide in proteins to methionine. The polypeptide is Peptide methionine sulfoxide reductase MsrA (Salmonella paratyphi B (strain ATCC BAA-1250 / SPB7)).